Reading from the N-terminus, the 210-residue chain is Proteasome subunit beta (210 aa).

The propeptide at 1–10 is removed in mature form; by autocatalysis; that stretch reads MKELDQLTKG. Thr11 serves as the catalytic Nucleophile.

It belongs to the peptidase T1B family. The 20S proteasome core is composed of 14 alpha and 14 beta subunits that assemble into four stacked heptameric rings, resulting in a barrel-shaped structure. The two inner rings, each composed of seven catalytic beta subunits, are sandwiched by two outer rings, each composed of seven alpha subunits. The catalytic chamber with the active sites is on the inside of the barrel. Has a gated structure, the ends of the cylinder being occluded by the N-termini of the alpha-subunits. Is capped at one or both ends by the proteasome regulatory ATPase, PAN.

Its subcellular location is the cytoplasm. It catalyses the reaction Cleavage of peptide bonds with very broad specificity.. Its activity is regulated as follows. The formation of the proteasomal ATPase PAN-20S proteasome complex, via the docking of the C-termini of PAN into the intersubunit pockets in the alpha-rings, triggers opening of the gate for substrate entry. Interconversion between the open-gate and close-gate conformations leads to a dynamic regulation of the 20S proteasome proteolysis activity. Its function is as follows. Component of the proteasome core, a large protease complex with broad specificity involved in protein degradation. This is Proteasome subunit beta from Methanopyrus kandleri (strain AV19 / DSM 6324 / JCM 9639 / NBRC 100938).